A 431-amino-acid chain; its full sequence is Na(+)-translocating NADH-quinone reductase subunit F (431 aa).

Residues 10–30 (ISIASLVFCVIGLILSGVILI) form a helical membrane-spanning segment. A 2Fe-2S ferredoxin-type domain is found at 41 to 133 (CKLKINNDDS…DMNLEIEERY (93 aa)). [2Fe-2S] cluster-binding residues include Cys-76, Cys-82, Cys-85, and Cys-117. Residues 136-286 (ASSWEGTVVS…SGPYGESFMK (151 aa)) enclose the FAD-binding FR-type domain.

Belongs to the NqrF family. In terms of assembly, composed of six subunits; NqrA, NqrB, NqrC, NqrD, NqrE and NqrF. The cofactor is [2Fe-2S] cluster. FAD serves as cofactor.

Its subcellular location is the cell inner membrane. The enzyme catalyses a ubiquinone + n Na(+)(in) + NADH + H(+) = a ubiquinol + n Na(+)(out) + NAD(+). Functionally, NQR complex catalyzes the reduction of ubiquinone-1 to ubiquinol by two successive reactions, coupled with the transport of Na(+) ions from the cytoplasm to the periplasm. The first step is catalyzed by NqrF, which accepts electrons from NADH and reduces ubiquinone-1 to ubisemiquinone by a one-electron transfer pathway. In Chlamydia felis (strain Fe/C-56) (Chlamydophila felis), this protein is Na(+)-translocating NADH-quinone reductase subunit F.